The primary structure comprises 262 residues: 3-methyl-2-oxobutanoate hydroxymethyltransferase (262 aa).

Mg(2+) is bound by residues Asp43 and Asp82. 3-methyl-2-oxobutanoate-binding positions include 43–44 (DS), Asp82, and Lys111. Glu113 contacts Mg(2+). Glu180 functions as the Proton acceptor in the catalytic mechanism.

This sequence belongs to the PanB family. Homodecamer; pentamer of dimers. Mg(2+) serves as cofactor.

The protein localises to the cytoplasm. It carries out the reaction 3-methyl-2-oxobutanoate + (6R)-5,10-methylene-5,6,7,8-tetrahydrofolate + H2O = 2-dehydropantoate + (6S)-5,6,7,8-tetrahydrofolate. It functions in the pathway cofactor biosynthesis; (R)-pantothenate biosynthesis; (R)-pantoate from 3-methyl-2-oxobutanoate: step 1/2. Functionally, catalyzes the reversible reaction in which hydroxymethyl group from 5,10-methylenetetrahydrofolate is transferred onto alpha-ketoisovalerate to form ketopantoate. The sequence is that of 3-methyl-2-oxobutanoate hydroxymethyltransferase from Wolinella succinogenes (strain ATCC 29543 / DSM 1740 / CCUG 13145 / JCM 31913 / LMG 7466 / NCTC 11488 / FDC 602W) (Vibrio succinogenes).